The primary structure comprises 299 residues: 4-sulfomuconolactone hydrolase (299 aa).

Belongs to the metallo-dependent hydrolases superfamily. Sulfomuconolactone hydrolase family. As to quaternary structure, monomer. Zn(2+) serves as cofactor.

It carries out the reaction 4-sulfomuconolactone + H2O = maleylacetate + sulfite + 2 H(+). Functionally, involved in the degradation of 4-sulfocatechol which is a central intermediate in the degradation of substituted sulfonated benzenes. Catalyzes the hydrolytical desulfonation of 4-sulfomuconolactone to yield maleylacetate. The chain is 4-sulfomuconolactone hydrolase from Rhizobium radiobacter (Agrobacterium tumefaciens).